The chain runs to 310 residues: tRNA-cytidine(32) 2-sulfurtransferase (310 aa).

Residues 45–50 carry the PP-loop motif motif; that stretch reads SGGKDS. Positions 120, 123, and 211 each coordinate [4Fe-4S] cluster.

Belongs to the TtcA family. In terms of assembly, homodimer. The cofactor is Mg(2+). [4Fe-4S] cluster serves as cofactor.

It localises to the cytoplasm. The enzyme catalyses cytidine(32) in tRNA + S-sulfanyl-L-cysteinyl-[cysteine desulfurase] + AH2 + ATP = 2-thiocytidine(32) in tRNA + L-cysteinyl-[cysteine desulfurase] + A + AMP + diphosphate + H(+). It functions in the pathway tRNA modification. Its function is as follows. Catalyzes the ATP-dependent 2-thiolation of cytidine in position 32 of tRNA, to form 2-thiocytidine (s(2)C32). The sulfur atoms are provided by the cysteine/cysteine desulfurase (IscS) system. This chain is tRNA-cytidine(32) 2-sulfurtransferase, found in Shewanella baltica (strain OS185).